The following is a 170-amino-acid chain: uncharacterized protein (170 aa).

This is an uncharacterized protein from Homo sapiens (Human).